Reading from the N-terminus, the 78-residue chain is Small ribosomal subunit protein bS18 (78 aa).

Belongs to the bacterial ribosomal protein bS18 family. Part of the 30S ribosomal subunit. Forms a tight heterodimer with protein bS6.

Its function is as follows. Binds as a heterodimer with protein bS6 to the central domain of the 16S rRNA, where it helps stabilize the platform of the 30S subunit. The polypeptide is Small ribosomal subunit protein bS18 (Geobacillus sp. (strain WCH70)).